The sequence spans 137 residues: uncharacterized protein (137 aa).

The segment at 1 to 26 is disordered; it reads MKDKMWCEDTAQPHRRLPAPPSSSSP.

This is an uncharacterized protein from Homo sapiens (Human).